A 488-amino-acid polypeptide reads, in one-letter code: Histone deacetylase 2 (488 aa).

A histone deacetylase region spans residues 9–322; that stretch reads KKKVCYYYDG…WTYETAVALD (314 aa). Glycine 28 and lysine 32 together coordinate 1D-myo-inositol 1,4,5,6-tetrakisphosphate. N6-acetyllysine; alternate is present on lysine 75. Residue lysine 75 forms a Glycyl lysine isopeptide (Lys-Gly) (interchain with G-Cter in SUMO2); alternate linkage. Histidine 142 is a catalytic residue. The Ca(2+) site is built by aspartate 175, aspartate 177, histidine 179, phenylalanine 188, threonine 191, valine 194, serine 198, and phenylalanine 199. Residues aspartate 177 and histidine 179 each coordinate Zn(2+). N6-acetyllysine is present on lysine 221. Tyrosine 223 provides a ligand contact to Ca(2+). Cysteine 262 carries the post-translational modification S-nitrosocysteine. Aspartate 265 contributes to the Zn(2+) binding site. 1D-myo-inositol 1,4,5,6-tetrakisphosphate is bound at residue arginine 271. Residue cysteine 274 is modified to S-nitrosocysteine. The tract at residues 389–488 is disordered; it reads AVHEDSGDED…GTKSEQLSNP (100 aa). Phosphoserine occurs at positions 394, 407, 422, and 424. Basic and acidic residues predominate over residues 402–417; that stretch reads PDKRISIRASDKRIAC. Positions 418–428 are enriched in acidic residues; it reads DEEFSDSEDEG. The span at 429 to 481 shows a compositional bias: basic and acidic residues; the sequence is EGGRRNVADHKKGAKKARIEEDKKETEDKKTDVKEEDKSKDNSGEKTDTKGTK. Glycyl lysine isopeptide (Lys-Gly) (interchain with G-Cter in SUMO2) cross-links involve residues lysine 439, lysine 452, lysine 458, lysine 462, lysine 478, and lysine 481.

The protein belongs to the histone deacetylase family. HD type 1 subfamily. In terms of assembly, part of the core histone deacetylase (HDAC) complex composed of HDAC1, HDAC2, RBBP4 and RBBP7, the core complex associates with SIN3, SAP18 and SAP30 to form the SIN3 HDAC complex. Component of the nucleosome remodeling and deacetylase (NuRD) repressor complex, composed of core proteins MTA1, MTA2, MTA3, RBBP4, RBBP7, HDAC1, HDAC2, MBD2, MBD3, and peripherally associated proteins CDK2AP1, CDK2AP2, GATAD2A, GATAD2B, CHD3, CHD4 and CHD5. The exact stoichiometry of the NuRD complex is unknown, and some subunits such as MBD2 and MBD3, GATAD2A and GATAD2B, and CHD3, CHD4 and CHD5 define mutually exclusive NuRD complexes. Component of a RCOR/GFI/KDM1A/HDAC complex. Component of a BHC histone deacetylase complex that contains HDAC1, HDAC2, HMG20B, KDM1A, RCOR1 and PHF21A. The BHC complex may also contain ZMYM2, ZNF217, ZMYM3, GSE1 and GTF2I. Part of a complex containing the core histones H2A, H2B, H3 and H4, DEK and unphosphorylated DAXX. Part of a complex containing ATR and CHD4. Forms a heterologous complex at least with YY1. Interacts in the late S-phase of DNA-replication with DNMT1 in the other transcriptional repressor complex composed of DNMT1, DMAP1, PCNA, CAF1. Component of a mSin3A corepressor complex that contains SIN3A, SAP130, SUDS3, ARID4B, HDAC1 and HDAC2. Part of a complex composed of TRIM28, HDAC1, HDAC2 and EHMT2. Part of a complex containing at least CDYL, MIER1, MIER2, HDAC1 and HDAC2. Component of a histone deacetylase complex containing DNTTIP1, ZNF541, HDAC1 and HDAC2. Forms a complex comprising APPL1, RUVBL2, APPL2, CTNNB1 and HDAC1. Interacts directly with GFI1. Interacts directly with GFI1B. Interacts with APEX1; the interaction is not dependent on the acetylated status of APEX1. Interacts with ATR. Interacts with BCL6 (non-acetylated form). Interacts with BEND3. Interacts with CBFA2T3. Interacts with CDK2AP1. Interacts with CHD4. Interacts with CHD5. Interacts with CHFR. Interacts with CRY1. Interacts with DNMT1. Interacts with GATAD2A. Interacts with HCFC1. Interacts with HDAC7. Interacts with HDAC10. Interacts with INSM1. Interacts with KDM4A. Interacts with MACROH2A1 (via the non-histone region). Interacts with MBD3L2. Interacts with MTA1, with a preference for sumoylated MTA1. Interacts with NACC2. Interacts with NRIP1. Interacts with PELP1. Interacts with PIMREG. Interacts with PRDM6. Interacts with PWWP2B. Interacts with SAP30. Interacts with SAP30L. Interacts with SETDB1. Interacts with SIX3. Interacts with SMARCAD1. Interacts with SNW1. Interacts with SPHK2. Interacts with SPEN/MINT. Interacts (CK2 phosphorylated form) with SP3. Interacts with SUV39H1. Interacts with TSHZ3 (via its N-terminus). Interacts with ZMYND8. Interacts with ZNF431. Interacts with ZNF263; recruited to the SIX3 promoter along with other proteins involved in chromatin modification and transcriptional corepression where it contributes to transcriptional repression. Identified in a complex with HDAC1, KCTD19, DNTTIP1 and ZNF541. Component of the SIN3B complex, which includes SIN3B, HDAC2, PHF12 and MORF4L1; interacts directly with all subunits. It depends on Zn(2+) as a cofactor. Ca(2+) serves as cofactor. S-nitrosylated by GAPDH. In neurons, S-nitrosylation at Cys-262 and Cys-274 does not affect enzyme activity, but induces HDAC2 release from chromatin. This in turn increases acetylation of histones surrounding neurotrophin-dependent gene promoters and promotes their transcription. In embryonic cortical neurons, S-Nitrosylation regulates dendritic growth and branching. As to expression, widely expressed; lower levels in brain and lung.

The protein localises to the nucleus. Its subcellular location is the cytoplasm. It catalyses the reaction N(6)-acetyl-L-lysyl-[histone] + H2O = L-lysyl-[histone] + acetate. It carries out the reaction N(6)-acetyl-L-lysyl-[protein] + H2O = L-lysyl-[protein] + acetate. The catalysed reaction is N(6)-(2E)-butenoyl-L-lysyl-[protein] + H2O = (2E)-2-butenoate + L-lysyl-[protein]. The enzyme catalyses N(6)-(2-hydroxyisobutanoyl)-L-lysyl-[protein] + H2O = 2-hydroxy-2-methylpropanoate + L-lysyl-[protein]. It catalyses the reaction N(6)-[(S)-lactoyl]-L-lysyl-[protein] + H2O = (S)-lactate + L-lysyl-[protein]. Its activity is regulated as follows. Inositol tetraphosphate (1D-myo-inositol 1,4,5,6-tetrakisphosphate) may act as an intermolecular glue between HDAC2 and N-Cor repressor complex components. Histone deacetylase that catalyzes the deacetylation of lysine residues on the N-terminal part of the core histones (H2A, H2B, H3 and H4). Histone deacetylation gives a tag for epigenetic repression and plays an important role in transcriptional regulation, cell cycle progression and developmental events. Histone deacetylases act via the formation of large multiprotein complexes. Forms transcriptional repressor complexes by associating with MAD, SIN3, YY1 and N-COR. Component of a RCOR/GFI/KDM1A/HDAC complex that suppresses, via histone deacetylase (HDAC) recruitment, a number of genes implicated in multilineage blood cell development. Acts as a component of the histone deacetylase NuRD complex which participates in the remodeling of chromatin. Component of the SIN3B complex that represses transcription and counteracts the histone acetyltransferase activity of EP300 through the recognition H3K27ac marks by PHF12 and the activity of the histone deacetylase HDAC2. Also deacetylates non-histone targets: deacetylates TSHZ3, thereby regulating its transcriptional repressor activity. May be involved in the transcriptional repression of circadian target genes, such as PER1, mediated by CRY1 through histone deacetylation. Involved in MTA1-mediated transcriptional corepression of TFF1 and CDKN1A. In addition to protein deacetylase activity, also acts as a protein-lysine deacylase by recognizing other acyl groups: catalyzes removal of (2E)-butenoyl (crotonyl), lactoyl (lactyl) and 2-hydroxyisobutanoyl (2-hydroxyisobutyryl) acyl groups from lysine residues, leading to protein decrotonylation, delactylation and de-2-hydroxyisobutyrylation, respectively. In Homo sapiens (Human), this protein is Histone deacetylase 2.